Here is an 808-residue protein sequence, read N- to C-terminus: Glutamate receptor 1.1 (808 aa).

A signal peptide spans 1-19; the sequence is MEILFSISILALLFSGVVA. At 20-541 the chain is on the extracellular side; sequence APSDDDVFEE…MWTFFDPFEK (522 aa). 3 N-linked (GlcNAc...) asparagine glycosylation sites follow: Asn-288, Asn-339, and Asn-504. Residues 542–562 traverse the membrane as a helical segment; it reads SLWLASGAFFVLTGIVVWLVE. Residues 563–570 lie on the Cytoplasmic side of the membrane; the sequence is RSVNPEFQ. Residues 571-591 traverse the membrane as a helical segment; sequence GSWGQQLSMMLWFGFSTIVFA. Over 592–602 the chain is Cytoplasmic; that stretch reads HREKLQKMSSR. Residues 603–623 form a helical membrane-spanning segment; the sequence is FLVIVWVFVVLILTSSYSANL. At 624 to 771 the chain is on the extracellular side; it reads TSTKTISRMQ…SKRFTFRELR (148 aa). The chain crosses the membrane as a helical span at residues 772 to 792; it reads GLFIIAGAAHVLVLALHLFHT. Residues 793–808 are Cytoplasmic-facing; the sequence is RQEVSRLCTKLQSFYK.

Belongs to the glutamate-gated ion channel (TC 1.A.10.1) family. May form heteromers. Expressed predominantly in roots. First detected in the root-shoot junction, and later in lateral roots and at the margin of matures leaves.

It is found in the membrane. In terms of biological role, glutamate-gated receptor that probably acts as a non-selective cation channel. Can transport sodium, potassium, and calcium ions. Functions as a carbon and nitrogen regulator and/or sensor that regulates carbon and nitrogen metabolism and distinct physiological process such as germination through the control of acid abscisic (ABA) biosynthesis. May be involved in light-signal transduction and calcium homeostasis via the regulation of calcium influx into cells. Seems required for the regulation of the abscisic acid (ABA) signaling pathway that modulates many aspects of plant physiology such as seed germination and response to drought (e.g. stomata opening). This chain is Glutamate receptor 1.1 (GLR1.1), found in Arabidopsis thaliana (Mouse-ear cress).